The chain runs to 176 residues: Small ribosomal subunit protein uS5 (176 aa).

One can recognise an S5 DRBM domain in the interval 11-74 (LSEVLVDVNR…QAAKKRMMKV (64 aa)).

Belongs to the universal ribosomal protein uS5 family. Part of the 30S ribosomal subunit. Contacts proteins S4 and S8.

Its function is as follows. With S4 and S12 plays an important role in translational accuracy. Functionally, located at the back of the 30S subunit body where it stabilizes the conformation of the head with respect to the body. The sequence is that of Small ribosomal subunit protein uS5 from Rickettsia rickettsii (strain Iowa).